Reading from the N-terminus, the 325-residue chain is Fructose-1,6-bisphosphatase class 1 (325 aa).

Glu-84, Asp-103, Leu-105, and Asp-106 together coordinate Mg(2+). Substrate contacts are provided by residues 106–109 (DGSS), Asn-196, and Lys-262. Glu-268 serves as a coordination point for Mg(2+).

The protein belongs to the FBPase class 1 family. In terms of assembly, homotetramer. Requires Mg(2+) as cofactor.

The protein localises to the cytoplasm. It carries out the reaction beta-D-fructose 1,6-bisphosphate + H2O = beta-D-fructose 6-phosphate + phosphate. The protein operates within carbohydrate biosynthesis; gluconeogenesis. The protein is Fructose-1,6-bisphosphatase class 1 of Shewanella oneidensis (strain ATCC 700550 / JCM 31522 / CIP 106686 / LMG 19005 / NCIMB 14063 / MR-1).